The sequence spans 469 residues: ATP synthase subunit beta (469 aa).

156–163 provides a ligand contact to ATP; sequence GGAGVGKT.

This sequence belongs to the ATPase alpha/beta chains family. F-type ATPases have 2 components, CF(1) - the catalytic core - and CF(0) - the membrane proton channel. CF(1) has five subunits: alpha(3), beta(3), gamma(1), delta(1), epsilon(1). CF(0) has three main subunits: a(1), b(2) and c(9-12). The alpha and beta chains form an alternating ring which encloses part of the gamma chain. CF(1) is attached to CF(0) by a central stalk formed by the gamma and epsilon chains, while a peripheral stalk is formed by the delta and b chains.

Its subcellular location is the cell membrane. The catalysed reaction is ATP + H2O + 4 H(+)(in) = ADP + phosphate + 5 H(+)(out). Functionally, produces ATP from ADP in the presence of a proton gradient across the membrane. The catalytic sites are hosted primarily by the beta subunits. This chain is ATP synthase subunit beta, found in Bacillus mycoides (strain KBAB4) (Bacillus weihenstephanensis).